The following is a 178-amino-acid chain: Cytochrome b6-f complex iron-sulfur subunit (178 aa).

Residues 20 to 42 (LLTFGSVTGVALGALYPVVNYFI) form a helical membrane-spanning segment. The region spanning 71–161 (THPAGDRSLV…VSVENDNVFV (91 aa)) is the Rieske domain. [2Fe-2S] cluster is bound by residues Cys-107, His-109, Cys-125, and His-128. Cys-112 and Cys-127 are disulfide-bonded.

The protein belongs to the Rieske iron-sulfur protein family. As to quaternary structure, the 4 large subunits of the cytochrome b6-f complex are cytochrome b6, subunit IV (17 kDa polypeptide, PetD), cytochrome f and the Rieske protein, while the 4 small subunits are PetG, PetL, PetM and PetN. The complex functions as a dimer. The cofactor is [2Fe-2S] cluster.

The protein localises to the cellular thylakoid membrane. The enzyme catalyses 2 oxidized [plastocyanin] + a plastoquinol + 2 H(+)(in) = 2 reduced [plastocyanin] + a plastoquinone + 4 H(+)(out). In terms of biological role, component of the cytochrome b6-f complex, which mediates electron transfer between photosystem II (PSII) and photosystem I (PSI), cyclic electron flow around PSI, and state transitions. The chain is Cytochrome b6-f complex iron-sulfur subunit from Synechococcus sp. (strain WH7803).